The sequence spans 482 residues: F-box/LRR-repeat protein At3g58930 (482 aa).

The F-box domain occupies 1–47 (MDRVSNLPDGVRGHILSFLPAKHIALTSVLSKSWLNLWKLIPILDID). LRR repeat units follow at residues 122–150 (SYED…KIRN), 175–200 (SDLI…RMAS), 222–248 (GTGC…NYSD), 313–344 (ILYL…GIKS), and 345–370 (EEGR…IIEG).

The protein is F-box/LRR-repeat protein At3g58930 of Arabidopsis thaliana (Mouse-ear cress).